Consider the following 691-residue polypeptide: DNA ligase (691 aa).

NAD(+)-binding positions include Asp-41–Asp-45, Ser-90–Leu-91, and Glu-130. Lys-132 acts as the N6-AMP-lysine intermediate in catalysis. Arg-153, Glu-190, Lys-307, and Lys-331 together coordinate NAD(+). Zn(2+) contacts are provided by Cys-425, Cys-428, Cys-443, and Cys-449. A BRCT domain is found at Ala-610–Arg-691.

This sequence belongs to the NAD-dependent DNA ligase family. LigA subfamily. The cofactor is Mg(2+). It depends on Mn(2+) as a cofactor.

It catalyses the reaction NAD(+) + (deoxyribonucleotide)n-3'-hydroxyl + 5'-phospho-(deoxyribonucleotide)m = (deoxyribonucleotide)n+m + AMP + beta-nicotinamide D-nucleotide.. Functionally, DNA ligase that catalyzes the formation of phosphodiester linkages between 5'-phosphoryl and 3'-hydroxyl groups in double-stranded DNA using NAD as a coenzyme and as the energy source for the reaction. It is essential for DNA replication and repair of damaged DNA. This is DNA ligase from Burkholderia pseudomallei (strain 668).